A 204-amino-acid chain; its full sequence is Inactive ribonuclease-like protein 9 (204 aa).

The N-terminal stretch at 1–26 is a signal peptide; the sequence is MMRTLITTHPLLLLLLLQQLLQPVQL. Disulfide bonds link C97-C152, C115-C167, and C122-C129. N130 and N142 each carry an N-linked (GlcNAc...) asparagine glycan.

This sequence belongs to the pancreatic ribonuclease family.

Its subcellular location is the secreted. Does not exhibit any ribonuclease activity. This is Inactive ribonuclease-like protein 9 (RNASE9) from Chlorocebus aethiops (Green monkey).